Consider the following 679-residue polypeptide: Protein hook (679 aa).

The Calponin-homology (CH) domain occupies 6-123 (NEMYYSLLEW…RLLQLVLGCA (118 aa)). Coiled coils occupy residues 135–437 (EIMC…LKCG) and 480–574 (QTAL…QEIL).

It belongs to the hook family. As to quaternary structure, homodimer. Interacts with microtubules via its N-terminus.

Its subcellular location is the cytoplasm. The protein localises to the cytoskeleton. It localises to the endosome. It is found in the synapse. Its function is as follows. Involved in endocytic trafficking by stabilizing organelles of the endocytic pathway. Probably acts as a cytoskeletal linker protein required to tether endosome vesicles to the cytoskeleton. Involved in modulation of endocytosis at stages required for down-regulation of membrane proteins that control synapse size. Not involved in synaptic vesicle recycling. Required in R7 cells for boss endocytosis into multivesicular bodies (MVBs). Has a role in regulating adult longevity. The polypeptide is Protein hook (Drosophila sechellia (Fruit fly)).